Consider the following 113-residue polypeptide: Ribonuclease P protein component (113 aa).

Belongs to the RnpA family. In terms of assembly, consists of a catalytic RNA component (M1 or rnpB) and a protein subunit.

The enzyme catalyses Endonucleolytic cleavage of RNA, removing 5'-extranucleotides from tRNA precursor.. Functionally, RNaseP catalyzes the removal of the 5'-leader sequence from pre-tRNA to produce the mature 5'-terminus. It can also cleave other RNA substrates such as 4.5S RNA. The protein component plays an auxiliary but essential role in vivo by binding to the 5'-leader sequence and broadening the substrate specificity of the ribozyme. This Ureaplasma parvum serovar 3 (strain ATCC 27815 / 27 / NCTC 11736) protein is Ribonuclease P protein component.